Here is a 179-residue protein sequence, read N- to C-terminus: Large ribosomal subunit protein uL5 (179 aa).

This sequence belongs to the universal ribosomal protein uL5 family. In terms of assembly, part of the 50S ribosomal subunit; part of the 5S rRNA/L5/L18/L25 subcomplex. Contacts the 5S rRNA and the P site tRNA. Forms a bridge to the 30S subunit in the 70S ribosome.

This is one of the proteins that bind and probably mediate the attachment of the 5S RNA into the large ribosomal subunit, where it forms part of the central protuberance. In the 70S ribosome it contacts protein S13 of the 30S subunit (bridge B1b), connecting the 2 subunits; this bridge is implicated in subunit movement. Contacts the P site tRNA; the 5S rRNA and some of its associated proteins might help stabilize positioning of ribosome-bound tRNAs. The polypeptide is Large ribosomal subunit protein uL5 (Dichelobacter nodosus (strain VCS1703A)).